We begin with the raw amino-acid sequence, 250 residues long: Low affinity immunoglobulin gamma Fc region receptor III-A (250 aa).

The signal sequence occupies residues 1-16; it reads MWQLLPPAALLLLVSA. At 17-208 the chain is on the extracellular side; it reads DTQTADPSKA…VSSFFLPWHQ (192 aa). 2 Ig-like C2-type domains span residues 23-105 and 99-189; these read PSKA…LEVH and PVKL…VQIT. 2 disulfide bridges follow: Cys-47/Cys-89 and Cys-128/Cys-172. 2 N-linked (GlcNAc...) asparagine glycosylation sites follow: Asn-56 and Asn-63. Asn-180 is a glycosylation site (N-linked (GlcNAc...) asparagine). The chain crosses the membrane as a helical span at residues 209–225; the sequence is ITFCLVMGVLFAVDTGL. Topologically, residues 226–250 are cytoplasmic; sequence YFSVRRHLQSSEEWRDGKVTWSKGP.

Forms a heterooligomeric complex with ITAM-containing signaling subunits FCER1G. Interacts (via transmembrane domain) with signaling subunits; this interaction is a prerequisite for receptor complex expression on the cell surface and intracellular signal transduction. Binds the Fc region of antigen-complexed IgG. In terms of tissue distribution, expressed in gamma-delta T cells.

The protein localises to the cell membrane. Functionally, receptor for the invariable Fc fragment of immunoglobulin gamma (IgG). Optimally activated upon binding of clustered antigen-IgG complexes displayed on cell surfaces, triggers lysis of antibody-coated cells, a process known as antibody-dependent cellular cytotoxicity (ADCC). Does not bind free monomeric IgG, thus avoiding inappropriate effector cell activation in the absence of antigenic trigger. Mediates IgG effector functions on natural killer (NK) cells. Binds antigen-IgG complexes generated upon infection and triggers NK cell-dependent cytokine production and degranulation to limit viral load and propagation. Fc-binding subunit that associates with FCER1G adapters to form functional signaling complexes. Following the engagement of antigen-IgG complexes, triggers phosphorylation of immunoreceptor tyrosine-based activation motif (ITAM)-containing adapter with subsequent activation of phosphatidylinositol 3-kinase signaling and sustained elevation of intracellular calcium that ultimately drive NK cell activation. Mediates enhanced ADCC in response to afucosylated IgGs. The sequence is that of Low affinity immunoglobulin gamma Fc region receptor III-A from Bos taurus (Bovine).